We begin with the raw amino-acid sequence, 583 residues long: Laccase-21 (583 aa).

An N-terminal signal peptide occupies residues 1–29; it reads MGIAKIPAVLWLLACAVLTFAVAISPAHG. 2 consecutive Plastocyanin-like domains span residues 39 to 155 and 165 to 323; these read FITE…PKHG and KEIP…YYTG. Asn85 carries N-linked (GlcNAc...) asparagine glycosylation. His89, His91, His134, and His136 together coordinate Cu cation. N-linked (GlcNAc...) asparagine glycans are attached at residues Asn282, Asn311, Asn384, Asn387, Asn399, Asn409, and Asn446. The region spanning 436-567 is the Plastocyanin-like 3 domain; sequence FPNNPAPVFV…NTVFIVKDGK (132 aa). Residues His484, His487, His489, His546, Cys547, His548, His552, and Met557 each coordinate Cu cation.

Belongs to the multicopper oxidase family. Cu cation serves as cofactor.

The protein localises to the secreted. It is found in the extracellular space. Its subcellular location is the apoplast. It carries out the reaction 4 hydroquinone + O2 = 4 benzosemiquinone + 2 H2O. In terms of biological role, lignin degradation and detoxification of lignin-derived products. The sequence is that of Laccase-21 (LAC21) from Oryza sativa subsp. japonica (Rice).